An 892-amino-acid chain; its full sequence is Alanine--tRNA ligase (892 aa).

Residues H565, H569, C678, and H682 each coordinate Zn(2+). The segment at 857 to 876 (GGKGGGGRPDMAQAGGPDGA) is disordered.

It belongs to the class-II aminoacyl-tRNA synthetase family. It depends on Zn(2+) as a cofactor.

The protein localises to the cytoplasm. The enzyme catalyses tRNA(Ala) + L-alanine + ATP = L-alanyl-tRNA(Ala) + AMP + diphosphate. Functionally, catalyzes the attachment of alanine to tRNA(Ala) in a two-step reaction: alanine is first activated by ATP to form Ala-AMP and then transferred to the acceptor end of tRNA(Ala). Also edits incorrectly charged Ser-tRNA(Ala) and Gly-tRNA(Ala) via its editing domain. The polypeptide is Alanine--tRNA ligase (Bradyrhizobium diazoefficiens (strain JCM 10833 / BCRC 13528 / IAM 13628 / NBRC 14792 / USDA 110)).